Reading from the N-terminus, the 245-residue chain is MLIIPAIDLKDGACVRLRQGRMDDSTVFSDDPVAMAARWVEAGCRRLHLVDLNGAFEGQPINGEVVTAIARRYPDLPIQIGGGIRSLETIEHYVKAGVGYVIIGTKAVKQPEFVGEACRAFPGKVIVGLDARDGFVATDGWAEVSSVQVVDLARRFEADGVSAIVYTDIAKDGMMQGCNVEATAALAAATRIPVIASGGIHDLGDIRKLLDARAPGIVGAITGRAIYEGTLDVAEAQALCDGFKG.

Catalysis depends on D8, which acts as the Proton acceptor. D130 functions as the Proton donor in the catalytic mechanism.

It belongs to the HisA/HisF family.

It is found in the cytoplasm. It carries out the reaction 1-(5-phospho-beta-D-ribosyl)-5-[(5-phospho-beta-D-ribosylamino)methylideneamino]imidazole-4-carboxamide = 5-[(5-phospho-1-deoxy-D-ribulos-1-ylimino)methylamino]-1-(5-phospho-beta-D-ribosyl)imidazole-4-carboxamide. It participates in amino-acid biosynthesis; L-histidine biosynthesis; L-histidine from 5-phospho-alpha-D-ribose 1-diphosphate: step 4/9. The protein is 1-(5-phosphoribosyl)-5-[(5-phosphoribosylamino)methylideneamino] imidazole-4-carboxamide isomerase of Azotobacter vinelandii (strain DJ / ATCC BAA-1303).